A 250-amino-acid polypeptide reads, in one-letter code: tRNA (guanine-N(1)-)-methyltransferase (250 aa).

S-adenosyl-L-methionine is bound by residues Gly116 and 136 to 141 (IGDYVL).

Belongs to the RNA methyltransferase TrmD family. As to quaternary structure, homodimer.

It is found in the cytoplasm. It carries out the reaction guanosine(37) in tRNA + S-adenosyl-L-methionine = N(1)-methylguanosine(37) in tRNA + S-adenosyl-L-homocysteine + H(+). Its function is as follows. Specifically methylates guanosine-37 in various tRNAs. In Pseudomonas putida (strain GB-1), this protein is tRNA (guanine-N(1)-)-methyltransferase.